A 149-amino-acid polypeptide reads, in one-letter code: UPF0179 protein MM_0589 (149 aa).

Belongs to the UPF0179 family.

The chain is UPF0179 protein MM_0589 from Methanosarcina mazei (strain ATCC BAA-159 / DSM 3647 / Goe1 / Go1 / JCM 11833 / OCM 88) (Methanosarcina frisia).